The chain runs to 85 residues: Putative membrane protein insertion efficiency factor (85 aa).

It belongs to the UPF0161 family.

Its subcellular location is the cell membrane. Functionally, could be involved in insertion of integral membrane proteins into the membrane. Its function is as follows. Lyses fish blood cells. In Aeromonas hydrophila, this protein is Putative membrane protein insertion efficiency factor (hlyA).